We begin with the raw amino-acid sequence, 464 residues long: NADH dehydrogenase [ubiquinone] flavoprotein 1, mitochondrial (464 aa).

A mitochondrion-targeting transit peptide spans 1-20 (MLATRRLLGWSLPARVSVRF). Position 81 is an N6-acetyllysine; alternate (Lys-81). The residue at position 81 (Lys-81) is an N6-succinyllysine; alternate. Residue 87–96 (GRGGAGFPTG) participates in NADH binding. Lys-104 is subject to N6-acetyllysine. 199–247 (RGAGAYICGEETALIESIEGKQGKPRLKPPFPADVGVFGCPTTVANVET) contacts FMN. Arg-257 carries the post-translational modification Omega-N-methylarginine. Residue Lys-375 is modified to N6-acetyllysine. Positions 379, 382, 385, and 425 each coordinate [4Fe-4S] cluster.

Belongs to the complex I 51 kDa subunit family. In terms of assembly, core subunit of respiratory chain NADH dehydrogenase (Complex I) which is composed of 45 different subunits. This is a component of the flavoprotein-sulfur (FP) fragment of the enzyme. Interacts with RAB5IF. The cofactor is FMN. [4Fe-4S] cluster serves as cofactor.

The protein resides in the mitochondrion inner membrane. It carries out the reaction a ubiquinone + NADH + 5 H(+)(in) = a ubiquinol + NAD(+) + 4 H(+)(out). Core subunit of the mitochondrial membrane respiratory chain NADH dehydrogenase (Complex I) which catalyzes electron transfer from NADH through the respiratory chain, using ubiquinone as an electron acceptor. Part of the peripheral arm of the enzyme, where the electrons from NADH are accepted by flavin mononucleotide (FMN) and then passed along a chain of iron-sulfur clusters by electron tunnelling to the final acceptor ubiquinone. Contains FMN, which is the initial electron acceptor as well as one iron-sulfur cluster. The protein is NADH dehydrogenase [ubiquinone] flavoprotein 1, mitochondrial of Pan troglodytes (Chimpanzee).